Here is a 621-residue protein sequence, read N- to C-terminus: MTAERGPRSPGTGQKLRLRATEPMPQWTAKNLHALLDLPAAMELRQIELIYRAEGNANLVLALPQFKKVLRLPKMISSRLRQAAHQRHELADEVARPEGQRVSSERAGTENAGDLTMPDFMAYIGIMRRLLGNEFVCGADIVAIPKEDDRFWINEHIRAQRPVSRLDKEFVGPFGLLLPDVTQLPATFDVLLANLQAKGTTGDESGAAAGVGDGGGVGRGAGTRTKNRSAVRRLGDTYAIEIKPKQGWLQLASDVNDLFDLMPSGAVTKPKETTCNQEENEPSARDKCWCRFCSMQLLKMHNGKIKRLGHYCPLDLFSGTPSRMLDALDALLACPQNNLRVFQNSNLIYGDHANSISFDELSSRVFPGEIMVLIKHLLVACLLREYEHPESKRAEGSNQSQKQQQEQPEPEQLNQSRVSIAATETKAGAAGIGAANVVLPLGGRAAAPVVTAGQSSTRTRAAAATATTQRYTKVARVETTITRQAATSMAAGPASSSQLSGNVLATATATATATAMATSGRTETKTEPETPAEAASTTSRNVNQNESQKLNRNEPANQTQAQNNKTEIFRLPKNCVLQKILNLQLLVKVSQPIKLLPKLLSLCPFGFVYSACPPENLGNCR.

Disordered stretches follow at residues 1 to 20 (MTAE…RLRA), 87 to 111 (RHEL…GTEN), and 201 to 226 (TGDE…TRTK). A compositionally biased stretch (basic and acidic residues) spans 87-108 (RHELADEVARPEGQRVSSERAG). Residues 209–221 (AGVGDGGGVGRGA) show a composition bias toward gly residues. The short motif at 241-245 (EIKPK) is the EXKPK motif element. 2 disordered regions span residues 391–416 (SKRA…LNQS) and 514–565 (TAMA…QNNK). Low complexity-rich tracts occupy residues 397–416 (SNQS…LNQS) and 529–539 (ETPAEAASTTS). Residues 540–565 (RNVNQNESQKLNRNEPANQTQAQNNK) show a composition bias toward polar residues.

Belongs to the IPK1 type 2 family.

The enzyme catalyses 1D-myo-inositol 1,3,4,5,6-pentakisphosphate + ATP = 1D-myo-inositol hexakisphosphate + ADP + H(+). Its function is as follows. Contributes to the formation of Ins(1,2,3,4,5,6)P6 (InsP6, IP6 or phytate). Phosphorylates Ins(1,3,4,5,6)P5 at position 2 to form InsP6. Together with Ipk2, they are the main contributors to higher InsP synthesis. The polypeptide is Inositol-pentakisphosphate 2-kinase (Ipk1) (Drosophila melanogaster (Fruit fly)).